We begin with the raw amino-acid sequence, 317 residues long: Aspartate carbamoyltransferase catalytic subunit (317 aa).

Carbamoyl phosphate is bound by residues Arg65 and Thr66. Lys93 contributes to the L-aspartate binding site. Positions 115, 145, and 148 each coordinate carbamoyl phosphate. Residues Arg178 and Arg233 each contribute to the L-aspartate site. Residues Gly274 and Pro275 each contribute to the carbamoyl phosphate site.

It belongs to the aspartate/ornithine carbamoyltransferase superfamily. ATCase family. In terms of assembly, heterododecamer (2C3:3R2) of six catalytic PyrB chains organized as two trimers (C3), and six regulatory PyrI chains organized as three dimers (R2).

It catalyses the reaction carbamoyl phosphate + L-aspartate = N-carbamoyl-L-aspartate + phosphate + H(+). The protein operates within pyrimidine metabolism; UMP biosynthesis via de novo pathway; (S)-dihydroorotate from bicarbonate: step 2/3. Catalyzes the condensation of carbamoyl phosphate and aspartate to form carbamoyl aspartate and inorganic phosphate, the committed step in the de novo pyrimidine nucleotide biosynthesis pathway. The chain is Aspartate carbamoyltransferase catalytic subunit from Bordetella bronchiseptica (strain ATCC BAA-588 / NCTC 13252 / RB50) (Alcaligenes bronchisepticus).